We begin with the raw amino-acid sequence, 513 residues long: GMP synthase [glutamine-hydrolyzing] (513 aa).

The region spanning 3-200 (SVTVLDFGSQ…LIDIAGIKPD (198 aa)) is the Glutamine amidotransferase type-1 domain. Cysteine 80 functions as the Nucleophile in the catalytic mechanism. Active-site residues include histidine 174 and glutamate 176. In terms of domain architecture, GMPS ATP-PPase spans 201 to 388 (WSPKSFIGHQ…LGIAEDILMR (188 aa)). 228 to 234 (SGGVDST) is a binding site for ATP.

In terms of assembly, homodimer.

It catalyses the reaction XMP + L-glutamine + ATP + H2O = GMP + L-glutamate + AMP + diphosphate + 2 H(+). It functions in the pathway purine metabolism; GMP biosynthesis; GMP from XMP (L-Gln route): step 1/1. Functionally, catalyzes the synthesis of GMP from XMP. This Chlorobium phaeobacteroides (strain DSM 266 / SMG 266 / 2430) protein is GMP synthase [glutamine-hydrolyzing].